Reading from the N-terminus, the 325-residue chain is Malate dehydrogenase (325 aa).

NAD(+) is bound at residue Gly-11–Ser-17. Substrate contacts are provided by Arg-92 and Arg-98. Residues Asn-105, Gln-112, and Val-129–Asn-131 contribute to the NAD(+) site. Positions 131 and 162 each coordinate substrate. The active-site Proton acceptor is the His-187.

The protein belongs to the LDH/MDH superfamily. MDH type 2 family.

The catalysed reaction is (S)-malate + NAD(+) = oxaloacetate + NADH + H(+). Catalyzes the reversible oxidation of malate to oxaloacetate. The sequence is that of Malate dehydrogenase from Desulfotalea psychrophila (strain LSv54 / DSM 12343).